Here is a 337-residue protein sequence, read N- to C-terminus: Ketol-acid reductoisomerase (NADP(+)) (337 aa).

In terms of domain architecture, KARI N-terminal Rossmann spans 3–183 (VEMFYDADAD…GGARAGVIKT (181 aa)). NADP(+) is bound by residues 26 to 29 (YGSQ), Lys-49, Ser-52, Ser-54, and 84 to 87 (DTAQ). His-109 is a catalytic residue. Gly-135 provides a ligand contact to NADP(+). In terms of domain architecture, KARI C-terminal knotted spans 184–329 (TFKDETETDL…KKLRDLMSWV (146 aa)). Mg(2+) contacts are provided by Asp-192, Glu-196, Glu-228, and Glu-232. Ser-253 provides a ligand contact to substrate.

It belongs to the ketol-acid reductoisomerase family. The cofactor is Mg(2+).

The catalysed reaction is (2R)-2,3-dihydroxy-3-methylbutanoate + NADP(+) = (2S)-2-acetolactate + NADPH + H(+). The enzyme catalyses (2R,3R)-2,3-dihydroxy-3-methylpentanoate + NADP(+) = (S)-2-ethyl-2-hydroxy-3-oxobutanoate + NADPH + H(+). The protein operates within amino-acid biosynthesis; L-isoleucine biosynthesis; L-isoleucine from 2-oxobutanoate: step 2/4. It functions in the pathway amino-acid biosynthesis; L-valine biosynthesis; L-valine from pyruvate: step 2/4. Functionally, involved in the biosynthesis of branched-chain amino acids (BCAA). Catalyzes an alkyl-migration followed by a ketol-acid reduction of (S)-2-acetolactate (S2AL) to yield (R)-2,3-dihydroxy-isovalerate. In the isomerase reaction, S2AL is rearranged via a Mg-dependent methyl migration to produce 3-hydroxy-3-methyl-2-ketobutyrate (HMKB). In the reductase reaction, this 2-ketoacid undergoes a metal-dependent reduction by NADPH to yield (R)-2,3-dihydroxy-isovalerate. The polypeptide is Ketol-acid reductoisomerase (NADP(+)) (Mycolicibacterium gilvum (strain PYR-GCK) (Mycobacterium gilvum (strain PYR-GCK))).